The following is a 194-amino-acid chain: dCTP deaminase (194 aa).

Residues 110 to 115, Asp128, 136 to 138, Tyr171, Lys178, and Gln182 contribute to the dCTP site; these read RSSLAR and VLE. Glu138 functions as the Proton donor/acceptor in the catalytic mechanism. Residues 169–194 form a disordered region; that stretch reads RPYNKRDNAKYKDQTSAVGSRISGEN. Basic and acidic residues predominate over residues 170–181; it reads PYNKRDNAKYKD. Polar residues predominate over residues 182 to 194; that stretch reads QTSAVGSRISGEN.

The protein belongs to the dCTP deaminase family. Homotrimer.

It catalyses the reaction dCTP + H2O + H(+) = dUTP + NH4(+). It functions in the pathway pyrimidine metabolism; dUMP biosynthesis; dUMP from dCTP (dUTP route): step 1/2. Functionally, catalyzes the deamination of dCTP to dUTP. The protein is dCTP deaminase of Marinomonas sp. (strain MWYL1).